The primary structure comprises 396 residues: Elongation factor Tu (396 aa).

One can recognise a tr-type G domain in the interval 10 to 206 (KPHVNVGTIG…ALDTYIPLPE (197 aa)). Positions 19-26 (GHVDHGKT) are G1. Residue 19–26 (GHVDHGKT) participates in GTP binding. Thr-26 provides a ligand contact to Mg(2+). Residues 60–64 (GITIN) form a G2 region. Residues 81-84 (DCPG) are G3. GTP is bound by residues 81–85 (DCPGH) and 136–139 (NKCD). Residues 136 to 139 (NKCD) are G4. Positions 174–176 (SAK) are G5.

It belongs to the TRAFAC class translation factor GTPase superfamily. Classic translation factor GTPase family. EF-Tu/EF-1A subfamily. Monomer.

The protein localises to the cytoplasm. The catalysed reaction is GTP + H2O = GDP + phosphate + H(+). GTP hydrolase that promotes the GTP-dependent binding of aminoacyl-tRNA to the A-site of ribosomes during protein biosynthesis. This is Elongation factor Tu from Polaromonas sp. (strain JS666 / ATCC BAA-500).